The sequence spans 292 residues: Sulfofructosephosphate aldolase (292 aa).

The active-site Schiff-base intermediate with substrate is Lys193.

Belongs to the aldolase LacD family. As to quaternary structure, homotetramer.

The enzyme catalyses 6-deoxy-6-sulfo-D-fructose 1-phosphate = (2S)-3-sulfolactaldehyde + dihydroxyacetone phosphate. In terms of biological role, cleaves 6-deoxy-6-sulfo-D-fructose 1-phosphate (SFP) to form dihydroxyacetone phosphate (DHAP) and 3-sulfolactaldehyde (SLA). The protein is Sulfofructosephosphate aldolase (yihT) of Escherichia coli (strain K12).